The sequence spans 153 residues: Ribosome maturation factor RimP (153 aa).

The protein belongs to the RimP family.

It localises to the cytoplasm. In terms of biological role, required for maturation of 30S ribosomal subunits. In Coxiella burnetii (strain Dugway 5J108-111), this protein is Ribosome maturation factor RimP.